Here is a 103-residue protein sequence, read N- to C-terminus: NADH-quinone oxidoreductase subunit K (103 aa).

The next 3 membrane-spanning stretches (helical) occupy residues leucine 4 to alanine 24, isoleucine 28 to threonine 48, and methionine 64 to phenylalanine 84.

Belongs to the complex I subunit 4L family. In terms of assembly, NDH-1 is composed of 14 different subunits. Subunits NuoA, H, J, K, L, M, N constitute the membrane sector of the complex.

It is found in the cell inner membrane. The enzyme catalyses a quinone + NADH + 5 H(+)(in) = a quinol + NAD(+) + 4 H(+)(out). Functionally, NDH-1 shuttles electrons from NADH, via FMN and iron-sulfur (Fe-S) centers, to quinones in the respiratory chain. The immediate electron acceptor for the enzyme in this species is believed to be ubiquinone. Couples the redox reaction to proton translocation (for every two electrons transferred, four hydrogen ions are translocated across the cytoplasmic membrane), and thus conserves the redox energy in a proton gradient. This chain is NADH-quinone oxidoreductase subunit K, found in Aliarcobacter butzleri (strain RM4018) (Arcobacter butzleri).